A 338-amino-acid polypeptide reads, in one-letter code: RNA 3'-terminal phosphate cyclase (338 aa).

ATP is bound by residues Gln103 and 283-287 (YLADQ). Catalysis depends on His308, which acts as the Tele-AMP-histidine intermediate.

It belongs to the RNA 3'-terminal cyclase family. Type 1 subfamily.

Its subcellular location is the cytoplasm. The enzyme catalyses a 3'-end 3'-phospho-ribonucleotide-RNA + ATP = a 3'-end 2',3'-cyclophospho-ribonucleotide-RNA + AMP + diphosphate. Catalyzes the conversion of 3'-phosphate to a 2',3'-cyclic phosphodiester at the end of RNA. The mechanism of action of the enzyme occurs in 3 steps: (A) adenylation of the enzyme by ATP; (B) transfer of adenylate to an RNA-N3'P to produce RNA-N3'PP5'A; (C) and attack of the adjacent 2'-hydroxyl on the 3'-phosphorus in the diester linkage to produce the cyclic end product. The biological role of this enzyme is unknown but it is likely to function in some aspects of cellular RNA processing. This is RNA 3'-terminal phosphate cyclase from Escherichia coli (strain SMS-3-5 / SECEC).